Reading from the N-terminus, the 622-residue chain is Arginine--tRNA ligase (622 aa).

The short motif at 127–137 is the 'HIGH' region element; it reads ANPVHPLHVGH.

The protein belongs to the class-I aminoacyl-tRNA synthetase family.

It localises to the cytoplasm. The enzyme catalyses tRNA(Arg) + L-arginine + ATP = L-arginyl-tRNA(Arg) + AMP + diphosphate. The protein is Arginine--tRNA ligase of Ignicoccus hospitalis (strain KIN4/I / DSM 18386 / JCM 14125).